A 363-amino-acid polypeptide reads, in one-letter code: Serpentine receptor class beta-17 (363 aa).

Helical transmembrane passes span Ala-46–Ile-66, Leu-75–Leu-95, Val-120–Cys-140, Ile-169–Tyr-189, Tyr-214–Tyr-234, Cys-273–Leu-293, and Val-304–Val-324.

Belongs to the nematode receptor-like protein srb family.

The protein resides in the membrane. The chain is Serpentine receptor class beta-17 (srb-17) from Caenorhabditis elegans.